Reading from the N-terminus, the 756-residue chain is Protein SDA1 homolog (756 aa).

Positions 227–282 (EEEEDEAVKEKRAKDNFRKKSLAHRVGKKTKGRITRLAKSKVDLKKAKQEEDNKLQ) form a coiled coil. Acidic residues-rich tracts occupy residues 494 to 514 (AGEE…EGWE) and 521 to 596 (ADDD…EEEE). Disordered regions lie at residues 494-615 (AGEE…VLRT) and 638-756 (AREN…RGRH). Positions 605–615 (QQKEKVEVLRT) are enriched in basic and acidic residues. The segment covering 647–656 (DMDQDDDENG) has biased composition (acidic residues). Residues 677–691 (EEKLERIARAKEGRD) show a composition bias toward basic and acidic residues. The segment covering 725–735 (KTKKVRGKSLK) has biased composition (basic residues). The segment covering 736–749 (SFRDKQIGQREHSA) has biased composition (basic and acidic residues).

The protein belongs to the SDA1 family.

Its subcellular location is the nucleus. It is found in the nucleolus. Its function is as follows. Required for 60S pre-ribosomal subunits export to the cytoplasm. The chain is Protein SDA1 homolog (sdad1) from Dictyostelium discoideum (Social amoeba).